The following is a 715-amino-acid chain: ATP-binding cassette sub-family B member 10, mitochondrial (715 aa).

Residues 1-82 (MRAPSARALL…SSGARRCWVL (82 aa)) constitute a mitochondrion transit peptide. At 83–133 (AGPRAAHPLFARLQGAAATGVRDLGNDSQRRPAATGRSEVWKLLGLVRPER) the chain is on the mitochondrial matrix side. Residues 134 to 157 (GRLSAAVGFLAVSSVITMSAPFFL) traverse the membrane as a helical segment. The 287-residue stretch at 136-422 (LSAAVGFLAV…LSSFYSELMK (287 aa)) folds into the ABC transmembrane type-1 domain. The Mitochondrial intermembrane segment spans residues 158–178 (GRIIDVIYTNPSEGYGDSLTR). The helical transmembrane segment at 179 to 201 (LCAVLTCVFLCGAAANGIRVYLM) threads the bilayer. The Mitochondrial matrix portion of the chain corresponds to 202-252 (QSSGQSIVNRLRTSLFSSILRQEVAFFDKTRTGELINRLSSDTALLGRSVT). An N6-acetyllysine modification is found at K230. A helical membrane pass occupies residues 253-275 (ENLSDGLRAGAQASVGVGMMFFV). At 276 to 278 (SPS) the chain is on the mitochondrial intermembrane side. Residues 279–298 (LATFVLSVVPPISVLAVIYG) traverse the membrane as a helical segment. The Mitochondrial matrix segment spans residues 299-357 (RYLRKLSKATQDSLAEATQLAEERIGNIRTIRAFGKEMTEVEKYTGRVDQLLQLAQKEA). A helical transmembrane segment spans residues 358-381 (LARAGFFGAAGLSGNLIVLSVLYK). At 382 to 395 (GGLLMGSAHMTVGE) the chain is on the mitochondrial intermembrane side. A helical membrane pass occupies residues 396-417 (LSSFLMYAFWVGLSIGGLSSFY). Topologically, residues 418–715 (SELMKGLGAG…AEQFLEPARA (298 aa)) are mitochondrial matrix. Residues 457 to 696 (LEFRNVHFTY…PNGLYRKLMN (240 aa)) form the ABC transporter domain. ATP-binding residues include G495, G497, K498, S499, and T500. Position 499 (S499) interacts with Mg(2+). At C547 the chain carries S-glutathionyl cysteine. D623 is a binding site for Mg(2+).

The protein belongs to the ABC transporter superfamily. ABCB family. Mitochondrial peptide exporter (TC 3.A.1.212) subfamily. In terms of assembly, homodimer or homooligomer. Interacts with PAAT; this interaction regulates ABCB10. Interacts with SLC25A37; this interaction stabilizes SLC25A37 and enhances the function of SLC25A37 to import mitochondrial iron during erythroid differentiation. Interacts with FECH; this interaction may allow the formation of the oligomeric complex with SLC25A37. Forms a complex with ABCB7 and FECH, where a dimeric FECH bridges ABCB7 and ABCB10 homodimers; this complex may be required for cellular iron homeostasis, mitochondrial function and heme biosynthesis. In terms of tissue distribution, expressed at particularly high levels in fetal liver, and erythroid tissues of embryos and adults. Found also in adult bone marrow, liver and kidney, and at lower levels in heart, brain and spleen.

It is found in the mitochondrion inner membrane. The enzyme catalyses biliverdin IXalpha(in) + ATP + H2O = biliverdin IXalpha(out) + ADP + phosphate + H(+). With respect to regulation, oxidized glutathione (GSSG) stimulates ATP hydrolysis without affecting ATP binding, whereas reduced glutathione (GSH) inhibits ATP binding and hydrolysis. Functionally, ATP-dependent transporter located in the mitochondrial inner membrane that catalyzes the export of biliverdin from the mitochondrial matrix, and plays a crucial role in hemoglobin synthesis and antioxidative stress. Participates in the early step of the heme biosynthetic process during insertion of iron into protoporphyrin IX (PPIX). Involved in the stabilization of the iron transporter mitoferrin-1/SLC25A37. In addition may be involved in mitochondrial unfolded protein response (UPRmt) signaling pathway, although ABCB10 probably does not participate in peptide export from mitochondria. The protein is ATP-binding cassette sub-family B member 10, mitochondrial of Mus musculus (Mouse).